The chain runs to 81 residues: Small ribosomal subunit protein bS16c (81 aa).

The protein belongs to the bacterial ribosomal protein bS16 family.

The protein resides in the plastid. The protein localises to the chloroplast. This Emiliania huxleyi (Coccolithophore) protein is Small ribosomal subunit protein bS16c.